We begin with the raw amino-acid sequence, 147 residues long: Large ribosomal subunit protein uL15 (147 aa).

Residues 1 to 57 form a disordered region; sequence MRLEDLRPTPGSMKKRKRVGRGPGSGHGKTSGRGHKGQKARGTGKVHPWFEGGQTPL. Positions 30–44 are enriched in basic residues; the sequence is TSGRGHKGQKARGTG.

This sequence belongs to the universal ribosomal protein uL15 family. Part of the 50S ribosomal subunit.

In terms of biological role, binds to the 23S rRNA. This is Large ribosomal subunit protein uL15 from Thermotoga neapolitana (strain ATCC 49049 / DSM 4359 / NBRC 107923 / NS-E).